The primary structure comprises 457 residues: MSGFTNKDGRQNLASCFNFRSSPFRLTVGERELKLEEDKNQLSKGLDPWTSNPTASASTLHYLLQEKERAQQAHEQLQIYQQQQGFGSFLQHRIRQPASRGPGGGGGGGDGGGSSGESTPVEALATAFGAGRIVRSAAGRKDRHSKVCTARGLRDRRVRLAAHTAIRFYDVQDRLGYDRPSKAVDWLMRNAKAAIDELPDRAEAPPPPAAASTEQPEATEQATSTSYGFGNTTGGTMTSAASAAAGSFLPHSLGADRVSDSVKSLFPSSSTASGAASAGHDEYRGSPPDLLSRTTSNQQPQELCLTLQSNQHQIFSHVSSNHHGMISSAGVPGWPDHSQRMQAWHAPENSTGDGRGGGNGDGYMFAMPSRQGLDQSQLFSHGEPLQSSGRGWASARAWLDPLAVAAIHHQPSTMAAGQVGFGHLVGGAGGGGGFMGFLAPAAQRLEGEEEHGSEVIR.

The stretch at 58 to 84 (STLHYLLQEKERAQQAHEQLQIYQQQQ) forms a coiled coil. The disordered stretch occupies residues 95 to 119 (RQPASRGPGGGGGGGDGGGSSGEST). Residues 101-115 (GPGGGGGGGDGGGSS) show a composition bias toward gly residues. The 59-residue stretch at 140–198 (RKDRHSKVCTARGLRDRRVRLAAHTAIRFYDVQDRLGYDRPSKAVDWLMRNAKAAIDEL) folds into the TCP domain. Disordered regions lie at residues 199-231 (PDRAEAPPPPAAASTEQPEATEQATSTSYGFGN) and 263-299 (KSLFPSSSTASGAASAGHDEYRGSPPDLLSRTTSNQQ). 2 stretches are compositionally biased toward low complexity: residues 210–225 (AASTEQPEATEQATST) and 268–278 (SSSTASGAASA).

Forms homodimers and heterodimers.

The protein resides in the nucleus. Its function is as follows. Transcription activator. Binds the promoter core sequence 5'-GGNCC-3'. This chain is Transcription factor PCF7 (PCF7), found in Oryza sativa subsp. japonica (Rice).